Reading from the N-terminus, the 394-residue chain is Deoxyguanosinetriphosphate triphosphohydrolase-like protein (394 aa).

The segment at 1-36 (MSQAPYFVPRAPYAEDPSKSKGRRFKEDESRTRTPF) is disordered. Basic and acidic residues predominate over residues 25 to 36 (FKEDESRTRTPF). The 141-residue stretch at 70–210 (RLTHTLEVAQ…AALADDIAYN (141 aa)) folds into the HD domain.

Belongs to the dGTPase family. Type 2 subfamily.

The sequence is that of Deoxyguanosinetriphosphate triphosphohydrolase-like protein from Caulobacter vibrioides (strain ATCC 19089 / CIP 103742 / CB 15) (Caulobacter crescentus).